The chain runs to 214 residues: Histone H1.1 (214 aa).

The tract at residues 1–43 (MSETAPVPQPASVAPEKPAATKKTRKPAKAAVPRKKPAGPSVS) is disordered. Ser2 bears the N-acetylserine mark. A phosphoserine mark is found at Ser2 and Ser12. N6-acetyllysine is present on Lys17. A compositionally biased stretch (basic residues) spans 20–37 (ATKKTRKPAKAAVPRKKP). At Lys36 the chain carries N6-(beta-hydroxybutyryl)lysine. Positions 38-111 (AGPSVSELIV…GAAGSFKLNK (74 aa)) constitute an H15 domain. Ser43 is subject to Phosphoserine. The residue at position 54 (Lys54) is an N6-(beta-hydroxybutyryl)lysine. Citrulline is present on Arg56. The residue at position 66 (Lys66) is an N6-(beta-hydroxybutyryl)lysine. Residue Ser67 is modified to Phosphoserine. Position 77 is an N6-acetyllysine (Lys77). N6-(beta-hydroxybutyryl)lysine is present on Lys87. Lys92 is subject to N6-(beta-hydroxybutyryl)lysine; alternate. Lys92 bears the N6-acetyllysine; alternate mark. The interval 93 to 214 (GTLVQTKGTG…KPKKAAPKKK (122 aa)) is disordered. A Phosphoserine modification is found at Ser106. The residue at position 108 (Lys108) is an N6-(beta-hydroxybutyryl)lysine. Residues 116–144 (KASTTKVTVKAKASGAAKKPKKTAGAAAK) show a composition bias toward low complexity. N6-acetyllysine is present on Lys121. Basic residues-rich tracts occupy residues 145-179 (KTVK…KKVA) and 186-214 (KAVK…PKKK). Phosphothreonine is present on Thr202.

This sequence belongs to the histone H1/H5 family. As to quaternary structure, interacts with DFFB. In terms of processing, H1 histones are progressively phosphorylated during the cell cycle, becoming maximally phosphorylated during late G2 phase and M phase, and being dephosphorylated sharply thereafter. Post-translationally, citrullination at Arg-56 (H1R54ci) by PADI4 takes place within the DNA-binding site of H1 and results in its displacement from chromatin and global chromatin decondensation, thereby promoting pluripotency and stem cell maintenance.

The protein resides in the nucleus. It is found in the chromosome. Functionally, H1 histones bind to linker DNA between nucleosomes forming the macromolecular structure known as the chromatin fiber. H1 histones are necessary for the condensation of nucleosome chains into higher-order structured fibers. Also acts as a regulator of individual gene transcription through chromatin remodeling. This Rattus norvegicus (Rat) protein is Histone H1.1.